The following is a 695-amino-acid chain: Lysophospholipase 2 (695 aa).

Positions 1-19 are cleaved as a signal peptide; it reads MQLSVLIASVLAAGAAVDA. N-linked (GlcNAc...) asparagine glycosylation is found at Asn26, Asn72, Asn83, Asn115, Asn152, Asn171, Asn207, Asn269, Asn335, Asn379, Asn480, Asn504, Asn513, Asn532, Asn556, Asn573, Asn620, Asn626, Asn644, and Asn648. Residues 28-577 enclose the PLA2c domain; sequence SCPDNANFIR…TNYCWNGTID (550 aa). The interval 612-662 is disordered; that stretch reads NTGSGTKSNSSSKTNSTLVTSSRATSTGTLISNSSSNSTVSSTAARSSTSS.

This sequence belongs to the lysophospholipase family.

It is found in the secreted. It localises to the cell wall. The enzyme catalyses a 1-acyl-sn-glycero-3-phosphocholine + H2O = sn-glycerol 3-phosphocholine + a fatty acid + H(+). In terms of biological role, catalyzes the release of fatty acids from lysophospholipids. Phospholipase B may well contribute to pathogenicity by abetting the fungus in damaging and traversing host cell membranes, processes which likely increase the rapidity of disseminated infection. The chain is Lysophospholipase 2 from Candida glabrata (strain ATCC 2001 / BCRC 20586 / JCM 3761 / NBRC 0622 / NRRL Y-65 / CBS 138) (Yeast).